Consider the following 312-residue polypeptide: Glycine--tRNA ligase alpha subunit (312 aa).

Belongs to the class-II aminoacyl-tRNA synthetase family. Tetramer of two alpha and two beta subunits.

It localises to the cytoplasm. The catalysed reaction is tRNA(Gly) + glycine + ATP = glycyl-tRNA(Gly) + AMP + diphosphate. The sequence is that of Glycine--tRNA ligase alpha subunit from Nostoc punctiforme (strain ATCC 29133 / PCC 73102).